A 222-amino-acid polypeptide reads, in one-letter code: DUF1769 family protein (222 aa).

This sequence belongs to the UPF0590 family.

The protein localises to the cytoplasm. It is found in the nucleus. This is DUF1769 family protein from Schizosaccharomyces pombe (strain 972 / ATCC 24843) (Fission yeast).